The primary structure comprises 249 residues: 3-deoxy-manno-octulosonate cytidylyltransferase (249 aa).

Belongs to the KdsB family.

It is found in the cytoplasm. It carries out the reaction 3-deoxy-alpha-D-manno-oct-2-ulosonate + CTP = CMP-3-deoxy-beta-D-manno-octulosonate + diphosphate. It participates in nucleotide-sugar biosynthesis; CMP-3-deoxy-D-manno-octulosonate biosynthesis; CMP-3-deoxy-D-manno-octulosonate from 3-deoxy-D-manno-octulosonate and CTP: step 1/1. Its pathway is bacterial outer membrane biogenesis; lipopolysaccharide biosynthesis. Its function is as follows. Activates KDO (a required 8-carbon sugar) for incorporation into bacterial lipopolysaccharide in Gram-negative bacteria. The protein is 3-deoxy-manno-octulosonate cytidylyltransferase of Coxiella burnetii (strain RSA 331 / Henzerling II).